The following is a 114-amino-acid chain: uncharacterized protein (114 aa).

Transmembrane regions (helical) follow at residues valine 14 to leucine 34 and valine 75 to alanine 95.

The protein localises to the membrane. This is an uncharacterized protein from Homo sapiens (Human).